The following is a 476-amino-acid chain: Retinoic acid receptor gamma (476 aa).

The interval 1 to 109 is modulating; the sequence is MANSSKERLC…PPPPPRVYKP (109 aa). The segment covering 81 to 96 has biased composition (low complexity); it reads STVETQSTSSEEMVPS. A disordered region spans residues 81–102; sequence STVETQSTSSEEMVPSSPSPPP. NR C4-type zinc fingers lie at residues 110 to 130 and 146 to 170; these read CFVC…CEGC and CHRD…LQKC. Residues 110–175 constitute a DNA-binding region (nuclear receptor); the sequence is CFVCNDKSSG…RLQKCFQVGM (66 aa). The hinge stretch occupies residues 176–205; that stretch reads SKEAVRNDRNKKKKEIKEEVVLPDSYEMPP. The Nuclear localization signal motif lies at 184 to 189; sequence RNKKKK. The region spanning 206-440 is the NR LBD domain; the sequence is EMEELIQKVS…PLIREMLENP (235 aa). The segment at 435 to 476 is disordered; the sequence is EMLENPEAFEDGAATPKPSERSSSESSNGSPTGEDSSGSKTP. The segment covering 462–476 has biased composition (polar residues); the sequence is NGSPTGEDSSGSKTP.

Belongs to the nuclear hormone receptor family. NR1 subfamily. Heterodimer; with a rxr molecule. Binds DNA preferentially as a rar/rxr heterodimer. In terms of tissue distribution, expressed in embryos, tadpoles and various adult tissue such as kidney, testis, brain, liver, skeletal muscle and spleen.

It is found in the nucleus. Receptor for retinoic acid. Retinoic acid receptors bind as heterodimers to their target response elements in response to their ligands, all-trans or 9-cis retinoic acid, and regulate gene expression in various biological processes. The rar/rxr heterodimers bind to the retinoic acid response elements (RARE) composed of tandem 5'-AGGTCA-3' sites known as DR1-DR5. This Xenopus laevis (African clawed frog) protein is Retinoic acid receptor gamma (rarg).